The following is a 938-amino-acid chain: Isoleucine--tRNA ligase (938 aa).

The 'HIGH' region signature appears at 58-68 (PYANGSIHIGH). Glu-561 contributes to the L-isoleucyl-5'-AMP binding site. The 'KMSKS' region signature appears at 602-606 (KMSKS). ATP is bound at residue Lys-605. The Zn(2+) site is built by Cys-901, Cys-904, Cys-921, and Cys-924.

This sequence belongs to the class-I aminoacyl-tRNA synthetase family. IleS type 1 subfamily. As to quaternary structure, monomer. Zn(2+) serves as cofactor.

Its subcellular location is the cytoplasm. It catalyses the reaction tRNA(Ile) + L-isoleucine + ATP = L-isoleucyl-tRNA(Ile) + AMP + diphosphate. Its function is as follows. Catalyzes the attachment of isoleucine to tRNA(Ile). As IleRS can inadvertently accommodate and process structurally similar amino acids such as valine, to avoid such errors it has two additional distinct tRNA(Ile)-dependent editing activities. One activity is designated as 'pretransfer' editing and involves the hydrolysis of activated Val-AMP. The other activity is designated 'posttransfer' editing and involves deacylation of mischarged Val-tRNA(Ile). The protein is Isoleucine--tRNA ligase of Baumannia cicadellinicola subsp. Homalodisca coagulata.